The following is a 389-amino-acid chain: Aspartate aminotransferase (389 aa).

Residues Gly34 and Asn171 each contribute to the L-aspartate site. Lys233 carries the N6-(pyridoxal phosphate)lysine modification. Arg362 contacts L-aspartate.

Belongs to the class-I pyridoxal-phosphate-dependent aminotransferase family. Homodimer. The cofactor is pyridoxal 5'-phosphate.

It is found in the cytoplasm. It carries out the reaction L-aspartate + 2-oxoglutarate = oxaloacetate + L-glutamate. The sequence is that of Aspartate aminotransferase (aspC) from Pyrococcus abyssi (strain GE5 / Orsay).